Consider the following 238-residue polypeptide: Ubiquinone biosynthesis O-methyltransferase (238 aa).

S-adenosyl-L-methionine is bound by residues R40, G59, D81, and M126.

It belongs to the methyltransferase superfamily. UbiG/COQ3 family.

The catalysed reaction is a 3-demethylubiquinol + S-adenosyl-L-methionine = a ubiquinol + S-adenosyl-L-homocysteine + H(+). The enzyme catalyses a 3-(all-trans-polyprenyl)benzene-1,2-diol + S-adenosyl-L-methionine = a 2-methoxy-6-(all-trans-polyprenyl)phenol + S-adenosyl-L-homocysteine + H(+). The protein operates within cofactor biosynthesis; ubiquinone biosynthesis. Functionally, O-methyltransferase that catalyzes the 2 O-methylation steps in the ubiquinone biosynthetic pathway. The sequence is that of Ubiquinone biosynthesis O-methyltransferase from Neisseria meningitidis serogroup C (strain 053442).